A 970-amino-acid polypeptide reads, in one-letter code: Pentatricopeptide repeat-containing protein At1g18485 (970 aa).

PPR repeat units lie at residues 119–149 (DDVLCTRIITMYAMCGSPDDSRFVFDALRSK), 150–185 (NLFQWNAVISSYSRNELYDEVLETFIEMISTTDLLP), 186–220 (DHFTYPCVIKACAGMSDVGIGLAVHGLVVKTGLVE), 221–251 (DVFVGNALVSFYGTHGFVTDALQLFDIMPER), 252–282 (NLVSWNSMIRVFSDNGFSEESFLLLGEMMEE), 291–325 (DVATLVTVLPVCAREREIGLGKGVHGWAVKLRLDK), 326–356 (ELVLNNALMDMYSKCGCITNAQMIFKMNNNK), 357–391 (NVVSWNTMVGGFSAEGDTHGTFDVLRQMLAGGEDV), 394–428 (DEVTILNAVPVCFHESFLPSLKELHCYSLKQEFVY), 429–459 (NELVANAFVASYAKCGSLSYAQRVFHGIRSK), 460–494 (TVNSWNALIGGHAQSNDPRLSLDAHLQMKISGLLP), 495–529 (DSFTVCSLLSACSKLKSLRLGKEVHGFIIRNWLER), 530–560 (DLFVYLSVLSLYIHCGELCTVQALFDAMEDK), 561–595 (SLVSWNTVITGYLQNGFPDRALGVFRQMVLYGIQL), 597–630 (GISMMPVFGACSLLPSLRLGREAHAYALKHLLED), 631–661 (DAFIACSLIDMYAKNGSITQSSKVFNGLKEK), 662–696 (STASWNAMIMGYGIHGLAKEAIKLFEEMQRTGHNP), 697–727 (DDLTFLGVLTACNHSGLIHEGLRYLDQMKSS), and 733–764 (NLKHYACVIDMLGRAGQLDKALRVVAEEMSEE). A type E motif region spans residues 770–845 (WKSLLSSCRI…AGCSWIELNR (76 aa)). The interval 846–875 (KVFSFVVGERFLDGFEEIKSLWSILEMKIS) is type E(+) motif. The segment at 876 to 970 (KMGYRPDTMS…NGVCSCGDYW (95 aa)) is type DYW motif.

The protein belongs to the PPR family. PCMP-H subfamily.

The sequence is that of Pentatricopeptide repeat-containing protein At1g18485 (PCMP-H8) from Arabidopsis thaliana (Mouse-ear cress).